We begin with the raw amino-acid sequence, 391 residues long: Thyroid hormone receptor alpha-B (391 aa).

Residues 1-32 (MAQWPEKEEEEQPMFGEEYTGYIPSYLEKDEP) are modulating. 2 NR C4-type zinc fingers span residues 33–53 (CVVCGDKATGYHYRCITCEGC) and 71–95 (CKYDCCCIIDKITRNQCQLCRFKKC). The segment at residues 33–100 (CVVCGDKATG…RFKKCIAVGM (68 aa)) is a DNA-binding region (nuclear receptor). The NR LBD domain occupies 143–388 (AEWELIRMVT…PPLFLEVFED (246 aa)).

This sequence belongs to the nuclear hormone receptor family. NR1 subfamily.

It localises to the nucleus. In terms of biological role, high affinity receptor for triiodothyronine. This Paralichthys olivaceus (Bastard halibut) protein is Thyroid hormone receptor alpha-B (thra2).